Here is a 257-residue protein sequence, read N- to C-terminus: Ribosomal RNA small subunit methyltransferase J (257 aa).

Residues 107 to 108, 123 to 124, and aspartate 177 each bind S-adenosyl-L-methionine; these read RD and ER.

The protein belongs to the methyltransferase superfamily. RsmJ family.

It is found in the cytoplasm. The catalysed reaction is guanosine(1516) in 16S rRNA + S-adenosyl-L-methionine = N(2)-methylguanosine(1516) in 16S rRNA + S-adenosyl-L-homocysteine + H(+). Functionally, specifically methylates the guanosine in position 1516 of 16S rRNA. The polypeptide is Ribosomal RNA small subunit methyltransferase J (Haemophilus influenzae (strain 86-028NP)).